Here is a 325-residue protein sequence, read N- to C-terminus: Beta-ketoacyl-[acyl-carrier-protein] synthase III (325 aa).

Residues cysteine 116 and histidine 252 contribute to the active site. An ACP-binding region spans residues 253–257; sequence QANLR. The active site involves asparagine 282.

The protein belongs to the thiolase-like superfamily. FabH family. As to quaternary structure, homodimer.

The protein resides in the cytoplasm. The catalysed reaction is butanoyl-CoA + malonyl-[ACP] + H(+) = 3-oxohexanoyl-[ACP] + CO2 + CoA. The enzyme catalyses hexanoyl-CoA + malonyl-[ACP] + H(+) = 3-oxooctanoyl-[ACP] + CO2 + CoA. It carries out the reaction octanoyl-CoA + malonyl-[ACP] + H(+) = 3-oxodecanoyl-[ACP] + CO2 + CoA. It catalyses the reaction decanoyl-CoA + malonyl-[ACP] + H(+) = 3-oxododecanoyl-[ACP] + CO2 + CoA. The catalysed reaction is 2-methylpropanoyl-CoA + malonyl-[ACP] + H(+) = 4-methyl-3-oxopentanoyl-[ACP] + CO2 + CoA. The enzyme catalyses 3-methylbutanoyl-CoA + malonyl-[ACP] + H(+) = 5-methyl-3-oxohexanoyl-[ACP] + CO2 + CoA. It carries out the reaction malonyl-[ACP] + acetyl-CoA + H(+) = 3-oxobutanoyl-[ACP] + CO2 + CoA. It functions in the pathway lipid metabolism; fatty acid biosynthesis. Functionally, catalyzes the condensation reaction of fatty acid synthesis by the addition to an acyl acceptor of two carbons from malonyl-ACP. Catalyzes the first condensation reaction which initiates fatty acid synthesis and may therefore play a role in governing the total rate of fatty acid production. Possesses both acetoacetyl-ACP synthase and acetyl transacylase activities. Can use a wide range of acyl-CoAs as the primer substrate in vitro, with a slight preference for short, medium-straight chain acyl-CoAs. Can also use branched-chain acyl-CoAs and acetyl-CoA. In Xanthomonas campestris pv. campestris (strain 8004), this protein is Beta-ketoacyl-[acyl-carrier-protein] synthase III.